The sequence spans 107 residues: UPF0122 protein EAT1b_2891 (107 aa).

The protein belongs to the UPF0122 family.

In terms of biological role, might take part in the signal recognition particle (SRP) pathway. This is inferred from the conservation of its genetic proximity to ftsY/ffh. May be a regulatory protein. The sequence is that of UPF0122 protein EAT1b_2891 from Exiguobacterium sp. (strain ATCC BAA-1283 / AT1b).